We begin with the raw amino-acid sequence, 49 residues long: Large ribosomal subunit protein bL33 (49 aa).

Belongs to the bacterial ribosomal protein bL33 family.

This Lactobacillus acidophilus (strain ATCC 700396 / NCK56 / N2 / NCFM) protein is Large ribosomal subunit protein bL33.